The primary structure comprises 93 residues: uncharacterized protein (93 aa).

This is an uncharacterized protein from Escherichia coli (strain K12).